The chain runs to 349 residues: Heat-inducible transcription repressor HrcA (349 aa).

The protein belongs to the HrcA family.

In terms of biological role, negative regulator of class I heat shock genes (grpE-dnaK-dnaJ and groELS operons). Prevents heat-shock induction of these operons. The chain is Heat-inducible transcription repressor HrcA from Xylella fastidiosa (strain M23).